The following is a 1342-amino-acid chain: DNA-directed RNA polymerase subunit beta (1342 aa).

N6-acetyllysine is present on residues K1022 and K1200.

The protein belongs to the RNA polymerase beta chain family. The RNAP catalytic core consists of 2 alpha, 1 beta, 1 beta' and 1 omega subunit. When a sigma factor is associated with the core the holoenzyme is formed, which can initiate transcription.

The catalysed reaction is RNA(n) + a ribonucleoside 5'-triphosphate = RNA(n+1) + diphosphate. Its function is as follows. DNA-dependent RNA polymerase catalyzes the transcription of DNA into RNA using the four ribonucleoside triphosphates as substrates. The chain is DNA-directed RNA polymerase subunit beta from Escherichia fergusonii (strain ATCC 35469 / DSM 13698 / CCUG 18766 / IAM 14443 / JCM 21226 / LMG 7866 / NBRC 102419 / NCTC 12128 / CDC 0568-73).